The following is a 1705-amino-acid chain: Receptor-type tyrosine-protein phosphatase V (1705 aa).

The signal sequence occupies residues 1-18; sequence MRPLILLAALLWLQDSLA. Over 19 to 1077 the chain is Extracellular; that stretch reads QEDVCSSLDG…QASISLVAMP (1059 aa). Residues 24 to 44 are disordered; that stretch reads SSLDGSPDRQGGGPPLSVSVT. 10 Fibronectin type-III domains span residues 37–129, 130–222, 218–305, 306–388, 393–454, 475–569, 565–654, 655–749, 744–831, and 832–926; these read PPLS…TAPT, VVRG…VPPD, PVPP…EWTY, PSYP…SIWL, ARPM…HYRV, PPQS…APPT, PAPP…TGWT, PPSA…TPNE, PLTP…VLSV, and EPGP…SAEV. N-linked (GlcNAc...) asparagine glycosylation is found at Asn74, Asn89, Asn117, Asn174, Asn239, Asn259, Asn299, Asn345, Asn431, Asn551, Asn570, Asn620, Asn649, Asn663, and Asn737. Asn851, Asn882, Asn970, and Asn982 each carry an N-linked (GlcNAc...) asparagine glycan. A helical transmembrane segment spans residues 1078-1100; it reads LTVMMGTVVGCIIIVCAVLCLLC. Residues 1101–1705 lie on the Cytoplasmic side of the membrane; it reads RRGLKGPRSE…LRNRLPRARK (605 aa). Tyrosine-protein phosphatase domains are found at residues 1150 to 1409 and 1427 to 1695; these read FFQE…LLNK and NFAQ…LNSA. Substrate is bound by residues Asp1316, 1350–1356, and Gln1394; that span reads CSAGVGR. Cys1350 functions as the Phosphocysteine intermediate in the catalytic mechanism.

The protein belongs to the protein-tyrosine phosphatase family. Receptor class 3 subfamily.

It is found in the membrane. The catalysed reaction is O-phospho-L-tyrosyl-[protein] + H2O = L-tyrosyl-[protein] + phosphate. In terms of biological role, protein tyrosine phosphatase that acts as a regulator of energy metabolism by mediating dephosphorylation of insulin receptor (Insr). Prevents decarboxylation of osteocalcin (Bglap and Bglap2) via an indirect mechanism: dephosphorylation of insulin receptor prevents insulin signaling-dependent decarboxylation of osteocalcin, preventing the hormone activity of osteocalcin. May play a role in the maintenance of pluripotency. This is Receptor-type tyrosine-protein phosphatase V (Ptprv) from Mus musculus (Mouse).